The primary structure comprises 316 residues: Ribosomal RNA small subunit methyltransferase H (316 aa).

Residues 35 to 37 (GGH), D55, F79, D101, and Q108 each bind S-adenosyl-L-methionine.

Belongs to the methyltransferase superfamily. RsmH family.

The protein localises to the cytoplasm. The enzyme catalyses cytidine(1402) in 16S rRNA + S-adenosyl-L-methionine = N(4)-methylcytidine(1402) in 16S rRNA + S-adenosyl-L-homocysteine + H(+). In terms of biological role, specifically methylates the N4 position of cytidine in position 1402 (C1402) of 16S rRNA. The polypeptide is Ribosomal RNA small subunit methyltransferase H (Vibrio proteolyticus (Aeromonas proteolytica)).